A 442-amino-acid polypeptide reads, in one-letter code: Probable folate-biopterin transporter 7 (442 aa).

The next 12 helical transmembrane spans lie at 23-43 (LGFG…ANFF), 64-82 (LPMV…VYFF), 87-107 (IPYI…IAFL), 114-134 (ILAL…VEVA), 158-178 (FVWM…GIAI), 184-204 (QSTF…TINI), 241-261 (IAWI…MFFY), 270-290 (ASLL…WGFA), 302-322 (KLLT…LLFV), 335-355 (VYVL…ILPF), 379-399 (IALA…FVGV), and 410-430 (GLAI…WIYD).

The protein belongs to the major facilitator superfamily. Folate-biopterin transporter (TC 2.A.71) family.

Its subcellular location is the membrane. Functionally, could mediate folate transport. This is Probable folate-biopterin transporter 7 from Arabidopsis thaliana (Mouse-ear cress).